Reading from the N-terminus, the 601-residue chain is uncharacterized protein (601 aa).

The interval 127 to 364 (SSLFSSGSPP…PAFANDDTVH (238 aa)) is disordered. The span at 128-137 (SLFSSGSPPD) shows a compositional bias: polar residues. The span at 141–154 (RNSTSNLSSVSTNS) shows a compositional bias: low complexity. Polar residues-rich tracts occupy residues 159 to 177 (TIGSNYNMLQSTKSTASQR), 199 to 213 (ALSSPTQGASSNVTP), and 232 to 250 (SATNEANKLSDIQTSSPSQ). Phosphoserine is present on residues S247 and S281. Over residues 265-281 (SLSSSPSSEDSDLSLSS) the composition is skewed to low complexity. Basic and acidic residues-rich tracts occupy residues 286-296 (DEKKQPSKSEK) and 313-325 (GSKEQNRIAKEKA). Phosphoserine is present on S335. The segment covering 338–356 (DTSTEYDSNSLRRSRSNPA) has biased composition (polar residues).

This is an uncharacterized protein from Schizosaccharomyces pombe (strain 972 / ATCC 24843) (Fission yeast).